A 298-amino-acid polypeptide reads, in one-letter code: MDQKQIEEIVRSVMASMGQDVPQPAAPSTQEGAKPQCAAPTVTESCALDLGSAEAKAWIGVENPHRADVLTELRRSTAARVCTGRAGPRPRTQALLRFLADHSRSKDTVLKEVPEEWVKAQGLLEVRSEISDKNLYLTRPDMGRRLSPEAIDALKSQCVMNPDVQVVVSDGLSTDAITANYEEILPPLLAGLKQAGLNVGTPFFVRYGRVKIEDQIGEILGAKVVILLVGERPGLGQSESLSCYAVYSPRVATTVEADRTCISNIHQGGTPPVEAAAVIVDLAKRMLEQKASGINMTR.

The tract at residues Met-1–Gln-19 is targets protein to the BMC. Val-210, Glu-231, and Cys-261 together coordinate adenosylcob(III)alamin.

Belongs to the EutC family. In terms of assembly, the basic unit is a heterodimer which dimerizes to form tetramers. The heterotetramers trimerize; 6 large subunits form a core ring with 6 small subunits projecting outwards. Interacts with EutS, which targets it to the interior of the BMC. Requires adenosylcob(III)alamin as cofactor.

It is found in the bacterial microcompartment. It catalyses the reaction ethanolamine = acetaldehyde + NH4(+). The protein operates within amine and polyamine degradation; ethanolamine degradation. Catalyzes the deamination of various vicinal amino-alcohols to oxo compounds. It is spontaneously inactivated by its substrate and reactivated by EutA. May play a role in bacterial microcompartment (BMC) assembly or maintenance. Directly targeted to the BMC. In terms of biological role, expression of the eut operon allows this bacteria to use ethanolamine (EA) as a carbon, nitrogen and energy source. It relies on cobalamin (vitamin B12) both as a cofactor for the ethanolamine ammonia-lyase activity and to induce the operon. EA enhances bacterial survival in macrophages in a concentration-dependent manner, suggesting it is an important nutrient during infection. This is Ethanolamine ammonia-lyase small subunit from Salmonella typhimurium (strain LT2 / SGSC1412 / ATCC 700720).